A 933-amino-acid chain; its full sequence is Progesterone receptor (933 aa).

An AF3; mediates transcriptional activation region spans residues 1–164; that stretch reads MTELKAKGPR…PATQGVLSPL (164 aa). The disordered stretch occupies residues 1 to 256; that stretch reads MTELKAKGPR…AAAGGGAAAV (256 aa). A modulating, Pro-Rich region spans residues 1–566; the sequence is MTELKAKGPR…YSFESLPQKI (566 aa). The residue at position 20 (Ser20) is a Phosphoserine. The LXXL motif 1 motif lies at 55-59; the sequence is LDGLL. Ser81 is subject to Phosphoserine. The LXXL motif 2 motif lies at 115–119; that stretch reads LETLL. A phosphoserine mark is found at Ser130 and Ser162. Residues 165–305 are mediates transcriptional transrepression; that stretch reads MSRSGGKAGD…LATTVMDFIH (141 aa). The short motif at 183-187 is the Nuclear localization signal element; it reads KVLPR. Residues Ser190 and Ser213 each carry the phosphoserine modification. A compositionally biased stretch (acidic residues) spans 220 to 231; sequence EVEEEDGSESEE. A compositionally biased stretch (low complexity) spans 232–246; that stretch reads SAGPLLKGKPRALGG. Residue Ser294 is modified to Phosphoserine; by MAPK1. The disordered stretch occupies residues 331 to 378; the sequence is GGAGAASAFAPPRSSPSASSTPVAVGDFPDCAYPPDAEPKDDAYPLYS. Over residues 335–350 the composition is skewed to low complexity; it reads AASAFAPPRSSPSASS. Ser345 carries the phosphoserine; by MAPK modification. Residue Lys388 forms a Glycyl lysine isopeptide (Lys-Gly) (interchain with G-Cter in SUMO); alternate linkage. Lys388 is covalently cross-linked (Glycyl lysine isopeptide (Lys-Gly) (interchain with G-Cter in ubiquitin); alternate). Ser400 carries the post-translational modification Phosphoserine; by CDK2. A disordered region spans residues 415 to 452; that stretch reads PDFPLGPPPPLPPRAPPSRPGEAAVTAAPASASVSSAS. Pro residues predominate over residues 418–433; that stretch reads PLGPPPPLPPRAPPSR. Residues 434-452 are compositionally biased toward low complexity; it reads PGEAAVTAAPASASVSSAS. Residues 456–546 form an AF1; mediates transcriptional activation region; that stretch reads STLECILYKA…VYPPYLNYLR (91 aa). A Glycyl lysine isopeptide (Lys-Gly) (interchain with G-Cter in SUMO) cross-link involves residue Lys531. 2 consecutive NR C4-type zinc fingers follow at residues 567–587 and 603–627; these read CLICGDEASGCHYGVLTCGSC and CAGRNDCIVDKIRRKNCPACRLRKC. The segment at residues 567 to 639 is a DNA-binding region (nuclear receptor); that stretch reads CLICGDEASG…AGMVLGGRKF (73 aa). Phosphoserine is present on Ser676. The region spanning 679–913 is the NR LBD domain; sequence QDIQLIPPLI…EFPEMMSEVI (235 aa). Residues 687 to 933 form an AF2; mediates transcriptional activation region; sequence LINLLMSIEP…MVKPLLFHKK (247 aa). Progesterone is bound at residue Arg766.

This sequence belongs to the nuclear hormone receptor family. In terms of assembly, interacts with SMARD1 and UNC45A. Interacts with CUEDC2; the interaction promotes ubiquitination, decreases sumoylation, and represses transcriptional activity. Interacts with PIAS3; the interaction promotes sumoylation of PR in a hormone-dependent manner, inhibits DNA-binding, and alters nuclear export. Interacts with SP1; the interaction requires ligand-induced phosphorylation on Ser-345 by ERK1/2-MAPK. Interacts with PRMT2. Interacts with NCOA2 and NCOA1. Interacts with KLF9. Interacts with GTF2B. Phosphorylated on multiple serine sites. Several of these sites are hormone-dependent. Phosphorylation on Ser-294 is highly hormone-dependent and modulates ubiquitination and sumoylation on Lys-388. Phosphorylation on Ser-102 and Ser-345 also requires induction by hormone. Basal phosphorylation on Ser-81, Ser-162, Ser-190 and Ser-400 is increased in response to progesterone and can be phosphorylated in vitro by the CDK2-A1 complex. Increased levels of phosphorylation on Ser-400 also in the presence of EGF, heregulin, IGF, PMA and FBS. Phosphorylation at this site by CDK2 is ligand-independent, and increases nuclear translocation and transcriptional activity. Phosphorylation at Ser-162 and Ser-294, but not at Ser-190, is impaired during the G(2)/M phase of the cell cycle. Phosphorylation on Ser-345 by ERK1/2 MAPK is required for interaction with SP1. Post-translationally, sumoylation is hormone-dependent and represses transcriptional activity. Sumoylation on all three sites is enhanced by PIAS3. Desumoylated by SENP1. Sumoylation on Lys-388, the main site of sumoylation, is repressed by ubiquitination on the same site, and modulated by phosphorylation at Ser-294. In terms of processing, ubiquitination is hormone-dependent and represses sumoylation on the same site. Promoted by MAPK-mediated phosphorylation on Ser-294. Ubiquitinated by UBR5, leading to its degradation: UBR5 specifically recognizes and binds ligand-bound PGR when it is not associated with coactivators (NCOAs). In presence of NCOAs, the UBR5-degron is not accessible, preventing its ubiquitination and degradation. Palmitoylated by ZDHHC7 and ZDHHC21. Palmitoylation is required for plasma membrane targeting and for rapid intracellular signaling via ERK and AKT kinases and cAMP generation.

The protein localises to the nucleus. Its subcellular location is the cytoplasm. Functionally, the steroid hormones and their receptors are involved in the regulation of eukaryotic gene expression and affect cellular proliferation and differentiation in target tissues. Transcriptional activator of several progesteron-dependent promoters in a variety of cell types. Involved in activation of SRC-dependent MAPK signaling on hormone stimulation. This Gorilla gorilla gorilla (Western lowland gorilla) protein is Progesterone receptor (PGR).